The following is a 62-amino-acid chain: MAKKLEITLTRSLIGRPQDQRVTVNTLGLRKMHQTVVQEDNAAIRGMVNKVSHLVTVKEIEA.

It belongs to the universal ribosomal protein uL30 family. Part of the 50S ribosomal subunit.

The polypeptide is Large ribosomal subunit protein uL30 (Halalkalibacterium halodurans (strain ATCC BAA-125 / DSM 18197 / FERM 7344 / JCM 9153 / C-125) (Bacillus halodurans)).